We begin with the raw amino-acid sequence, 585 residues long: Putative sulfur deprivation response regulator (585 aa).

5 helical membrane-spanning segments follow: residues 5-25 (VVDADVCLFAASTLLLLRGII), 30-50 (AFAGLANDSIVSIALMMMIAA), 83-103 (VASVSAVMNNTPLVAVMIPVV), 117-137 (FMMPLSYSAILGGLCTIIGTS), and 162-182 (IIGLPLTVAGGIYVVLFSPLL). RCK C-terminal domains lie at 189–274 (MMAA…LPGL) and 288–372 (ETVA…STEW). Transmembrane regions (helical) follow at residues 389–409 (LALFMSLGIFIALIVLNSMDV), 411–431 (PLSTTALVCLFAYLITGVLTV), 442–462 (ILLTVAGGFGVAKAMTVTGLA), 482–502 (VAAIYASTSLLTALLSNGAAV), and 561–581 (FGLPLQFVAALITVPICVLYF).

It belongs to the CitM (TC 2.A.11) transporter family.

The protein resides in the membrane. Not known; mutations in SAC1 produces cells that cannot synthesize arylsulfatase and cannot take up sulfate as rapidly as wild-type cells. SAC1 is necessary for cells to survive sulfur deprivation. This chain is Putative sulfur deprivation response regulator (SAC1), found in Chlamydomonas reinhardtii (Chlamydomonas smithii).